We begin with the raw amino-acid sequence, 227 residues long: 7-cyano-7-deazaguanine synthase (227 aa).

9–19 (LSGGLDSATVL) contributes to the ATP binding site. Zn(2+)-binding residues include C189, C199, C202, and C205.

The protein belongs to the QueC family. Requires Zn(2+) as cofactor.

It catalyses the reaction 7-carboxy-7-deazaguanine + NH4(+) + ATP = 7-cyano-7-deazaguanine + ADP + phosphate + H2O + H(+). It participates in purine metabolism; 7-cyano-7-deazaguanine biosynthesis. Catalyzes the ATP-dependent conversion of 7-carboxy-7-deazaguanine (CDG) to 7-cyano-7-deazaguanine (preQ(0)). The chain is 7-cyano-7-deazaguanine synthase from Cupriavidus metallidurans (strain ATCC 43123 / DSM 2839 / NBRC 102507 / CH34) (Ralstonia metallidurans).